Consider the following 600-residue polypeptide: Pentatricopeptide repeat-containing protein At3g29230 (600 aa).

PPR repeat units follow at residues 50-80, 81-115, 116-150, 151-183, 184-218, 219-245, 246-276, 279-313, 314-348, 349-379, 380-414, 415-445, and 451-481; these read DLHI…VQEP, NVHL…GLFA, DNFT…GLSS, DIYV…MSER, DTVS…DLIS, WNTM…MPER, NTVS…MPLP, NVVT…GLKF, DAAA…NLGS, NAYV…IPKK, DLVS…GIRP, DKVT…MEKV, and QVEH…MPME. The tract at residues 486–561 is type E motif; sequence IWGALLGACR…PSGASSVELE (76 aa). Residues 562-592 are type E(+) motif; sequence DGIHEFTVFDKSHPKSDQIYQMLGSLIEPPD.

This sequence belongs to the PPR family. PCMP-E subfamily.

The chain is Pentatricopeptide repeat-containing protein At3g29230 (PCMP-E27) from Arabidopsis thaliana (Mouse-ear cress).